The primary structure comprises 225 residues: Holliday junction branch migration complex subunit RuvA (225 aa).

The tract at residues 1–71 (MISWINGDLV…EDSDLLFGFT (71 aa)) is domain I. A domain II region spans residues 72–150 (SKDQKNFFIE…SEILSEEEKS (79 aa)). The interval 151–161 (KDEFEIKDPEI) is flexible linker. The tract at residues 161–225 (IIKMIEDLQL…LDEDSSNKDR (65 aa)) is domain III.

It belongs to the RuvA family. Homotetramer. Forms an RuvA(8)-RuvB(12)-Holliday junction (HJ) complex. HJ DNA is sandwiched between 2 RuvA tetramers; dsDNA enters through RuvA and exits via RuvB. An RuvB hexamer assembles on each DNA strand where it exits the tetramer. Each RuvB hexamer is contacted by two RuvA subunits (via domain III) on 2 adjacent RuvB subunits; this complex drives branch migration. In the full resolvosome a probable DNA-RuvA(4)-RuvB(12)-RuvC(2) complex forms which resolves the HJ.

It localises to the cytoplasm. The RuvA-RuvB-RuvC complex processes Holliday junction (HJ) DNA during genetic recombination and DNA repair, while the RuvA-RuvB complex plays an important role in the rescue of blocked DNA replication forks via replication fork reversal (RFR). RuvA specifically binds to HJ cruciform DNA, conferring on it an open structure. The RuvB hexamer acts as an ATP-dependent pump, pulling dsDNA into and through the RuvAB complex. HJ branch migration allows RuvC to scan DNA until it finds its consensus sequence, where it cleaves and resolves the cruciform DNA. This chain is Holliday junction branch migration complex subunit RuvA, found in Prochlorococcus marinus (strain AS9601).